A 1081-amino-acid polypeptide reads, in one-letter code: Protein QUIRKY (1081 aa).

The C2 1 domain occupies 1 to 124 (MNTTPFHSDP…SRRGEEGLVY (124 aa)). Disordered stretches follow at residues 154-198 (DTAG…MNIP) and 238-323 (PQHV…MEKK). Over residues 163–176 (QQQQQQQQFHPPQQ) the composition is skewed to low complexity. Residues 248-257 (NHPHRNDNHP) show a composition bias toward basic and acidic residues. Positions 258–268 (QRPPSPPPPPS) are enriched in pro residues. C2 domains are found at residues 318 to 440 (TTME…PQWY), 477 to 605 (SSDA…SKWH), and 652 to 778 (VCSD…TNSY). Residues glutamate 351, serine 352, aspartate 408, and serine 413 each contribute to the Ca(2+) site. Transmembrane regions (helical) follow at residues 879-899 (WYRIVGVLAWAVGLAKWLDNI), 916-936 (LVLVWYPDLVVPTAFLYVVMI), and 1024-1044 (LFIAICLVITIVLYAVPAKMV).

The protein belongs to the MCTP family. Interacts with SUB/SCM and POQ at the plasma membrane. Binds to SUB/SCM at plasmodesmata (PD) in root epidermal cells to promote tissue morphogenesis. Ca(2+) is required as a cofactor. As to expression, observed mainly in flowers, and, to a lower extent, in seedlings, roots, shoots, leaves, stems and inflorescences. Expressed in the vascular tissues of roots, cotyledons and rosette leaves. Accumulates in roots meristems.

It is found in the cell membrane. It localises to the cytoplasm. Its subcellular location is the golgi apparatus membrane. The protein localises to the cell junction. The protein resides in the plasmodesma. Functionally, may be involved in Ca 2(+)-dependent signaling and membrane trafficking. Plays a role in fruit dehiscence. Components of the machinery involved in organ development mediated by the receptor-like kinase STRUBBELIG (SUB). Collaboratively with SUB and POQ, regulates cell growth anisotropy during gynoecium development, thus linking together cell-cell communication and cellular growth. Together with SUB/SCM, links RLK-dependent signal transduction and intercellular communication mediated by plasmodesmata (PD) to regulate tissue morphogenesis. May function as a signaling molecule by regulating the trafficking of other regulators. The protein is Protein QUIRKY of Arabidopsis thaliana (Mouse-ear cress).